A 93-amino-acid polypeptide reads, in one-letter code: DNA-directed RNA polymerase subunit omega (93 aa).

It belongs to the RNA polymerase subunit omega family. The RNAP catalytic core consists of 2 alpha, 1 beta, 1 beta' and 1 omega subunit. When a sigma factor is associated with the core the holoenzyme is formed, which can initiate transcription.

The enzyme catalyses RNA(n) + a ribonucleoside 5'-triphosphate = RNA(n+1) + diphosphate. In terms of biological role, promotes RNA polymerase assembly. Latches the N- and C-terminal regions of the beta' subunit thereby facilitating its interaction with the beta and alpha subunits. This is DNA-directed RNA polymerase subunit omega from Shewanella loihica (strain ATCC BAA-1088 / PV-4).